Consider the following 318-residue polypeptide: ATP synthase gamma chain (318 aa).

This sequence belongs to the ATPase gamma chain family. F-type ATPases have 2 components, CF(1) - the catalytic core - and CF(0) - the membrane proton channel. CF(1) has five subunits: alpha(3), beta(3), gamma(1), delta(1), epsilon(1). CF(0) has three main subunits: a, b and c.

The protein localises to the cell membrane. Functionally, produces ATP from ADP in the presence of a proton gradient across the membrane. The gamma chain is believed to be important in regulating ATPase activity and the flow of protons through the CF(0) complex. In Lactobacillus gasseri (strain ATCC 33323 / DSM 20243 / BCRC 14619 / CIP 102991 / JCM 1131 / KCTC 3163 / NCIMB 11718 / NCTC 13722 / AM63), this protein is ATP synthase gamma chain.